The sequence spans 284 residues: Ribosomal RNA small subunit methyltransferase A (284 aa).

The S-adenosyl-L-methionine site is built by Asn12, Leu14, Gly38, Glu59, Asp81, and Asn106.

It belongs to the class I-like SAM-binding methyltransferase superfamily. rRNA adenine N(6)-methyltransferase family. RsmA subfamily.

The protein localises to the cytoplasm. The catalysed reaction is adenosine(1518)/adenosine(1519) in 16S rRNA + 4 S-adenosyl-L-methionine = N(6)-dimethyladenosine(1518)/N(6)-dimethyladenosine(1519) in 16S rRNA + 4 S-adenosyl-L-homocysteine + 4 H(+). Functionally, specifically dimethylates two adjacent adenosines (A1518 and A1519) in the loop of a conserved hairpin near the 3'-end of 16S rRNA in the 30S particle. May play a critical role in biogenesis of 30S subunits. This chain is Ribosomal RNA small subunit methyltransferase A, found in Phytoplasma australiense.